The primary structure comprises 397 residues: MERNTPKKAVHFGAGNIGRGFVACFLHESGYEVIFAEVNDATVSKLNTHKSYKVIEVGAEGTTEKTITNYRAINSRSNEAALVEEIATADVVTCSVGPNILKFLAPVIAKGLAARSTDLTPAAVIACENAIGATDTLAEFIKSPENTNPALLEDYDKRATFANSAIDRIVPAQDPDAGLDVKLEKFYEWVVEKTPFKEWAVPDIKGIKWVDNLQPFIERKLYTVNTGHATAAYYGYTRRKSTVYDALQDKDIRDEVKNALKETADLITEKHGIDEEEQKQYVDKIVRRISNPHLEDAVERVGRAPLRKLSRKERFIGPAAELAENGKDCSALLDAAEMAFRFQNVEGDDESFELAKIMEEKKPEEVVQEVCGLQPSEKLYPQVVDIVKRVQADSNEE.

Residue 9–20 (AVHFGAGNIGRG) coordinates NAD(+). The active site involves Lys220.

It belongs to the mannitol dehydrogenase family. Monomer.

The enzyme catalyses D-mannitol 1-phosphate + NAD(+) = beta-D-fructose 6-phosphate + NADH + H(+). In terms of biological role, catalyzes the NAD(H)-dependent interconversion of D-fructose 6-phosphate and D-mannitol 1-phosphate in the mannitol metabolic pathway. The polypeptide is Mannitol-1-phosphate 5-dehydrogenase (Podospora anserina (strain S / ATCC MYA-4624 / DSM 980 / FGSC 10383) (Pleurage anserina)).